Here is a 506-residue protein sequence, read N- to C-terminus: Histidine ammonia-lyase (506 aa).

Residues 144 to 146 constitute a cross-link (5-imidazolinone (Ala-Gly)); that stretch reads ASG. Position 145 is a 2,3-didehydroalanine (Ser) (Ser145).

This sequence belongs to the PAL/histidase family. In terms of processing, contains an active site 4-methylidene-imidazol-5-one (MIO), which is formed autocatalytically by cyclization and dehydration of residues Ala-Ser-Gly.

The protein resides in the cytoplasm. The catalysed reaction is L-histidine = trans-urocanate + NH4(+). The protein operates within amino-acid degradation; L-histidine degradation into L-glutamate; N-formimidoyl-L-glutamate from L-histidine: step 1/3. In Legionella pneumophila (strain Lens), this protein is Histidine ammonia-lyase.